The primary structure comprises 120 residues: Movement protein TGB2 (120 aa).

The Cytoplasmic portion of the chain corresponds to 1 to 8 (MPFAQPPD). The chain crosses the membrane as a helical span at residues 9–29 (YSKSVFPIAVGIAVAVVLFTL). Residues 30 to 71 (TRSTLPQVGDNIHNLPHGGNYQDGTKRISYCGPRDSFPSSSL) lie on the Lumenal side of the membrane. A helical transmembrane segment spans residues 72-92 (ISSGTPMIIGIIIFLIFAIYV). The Cytoplasmic segment spans residues 93–120 (SEKWSRSGSRRCSCCVPGAPACTATVHE).

The protein belongs to the Tymovirales TGBp2 protein family.

The protein localises to the host endoplasmic reticulum membrane. Its function is as follows. Plays a role in viral cell-to-cell propagation, by facilitating genome transport to neighboring plant cells through plasmosdesmata,. This chain is Movement protein TGB2, found in Crataegus (hawthorn).